The sequence spans 560 residues: Probable 2,3-bisphosphoglycerate-independent phosphoglycerate mutase 2 (560 aa).

Gly2 is subject to N-acetylglycine. Mn(2+) contacts are provided by Asp29 and Ser82. Ser82 (phosphoserine intermediate) is an active-site residue. Substrate is bound by residues His141, Arg171 to Asp172, Arg207, Arg214, Arg287 to Arg290, and Lys362. The Mn(2+) site is built by Asp431, His435, Asp472, His473, and His502.

It belongs to the BPG-independent phosphoglycerate mutase family. Monomer. It depends on Mn(2+) as a cofactor.

The protein resides in the cytoplasm. It carries out the reaction (2R)-2-phosphoglycerate = (2R)-3-phosphoglycerate. It functions in the pathway carbohydrate degradation; glycolysis; pyruvate from D-glyceraldehyde 3-phosphate: step 3/5. Functionally, catalyzes the interconversion of 2-phosphoglycerate (2-PGA) and 3-phosphoglycerate (3-PGA). Required for guard cell function (e.g. blue light-, abscisic acid- (ABA), and low CO(2)-regulated stomatal movements) and fertility (e.g. pollen grains production). This is Probable 2,3-bisphosphoglycerate-independent phosphoglycerate mutase 2 (PGM2) from Arabidopsis thaliana (Mouse-ear cress).